The sequence spans 100 residues: Large ribosomal subunit protein uL23 (100 aa).

Belongs to the universal ribosomal protein uL23 family. In terms of assembly, part of the 50S ribosomal subunit. Contacts protein L29, and trigger factor when it is bound to the ribosome.

Its function is as follows. One of the early assembly proteins it binds 23S rRNA. One of the proteins that surrounds the polypeptide exit tunnel on the outside of the ribosome. Forms the main docking site for trigger factor binding to the ribosome. The protein is Large ribosomal subunit protein uL23 of Dechloromonas aromatica (strain RCB).